The primary structure comprises 74 residues: Protein kish-B (74 aa).

The N-terminal stretch at 1-22 is a signal peptide; it reads MTNVYSLDGILVFGLLFVCTCA. The Extracellular segment spans residues 23–52; the sequence is YFKKVPRLKTWLLSEKKGVWGVFYKAAVIG. Residues 53-73 traverse the membrane as a helical segment; it reads TRLHAAVAIACIVMAFYVLFI. Residue Lys74 is a topological domain, cytoplasmic.

It belongs to the KISH family.

The protein resides in the golgi apparatus membrane. Functionally, involved in the early part of the secretory pathway. In Bos taurus (Bovine), this protein is Protein kish-B (TMEM167B).